The following is a 433-amino-acid chain: Sulfhydrylase FUB7 (433 aa).

The residue at position 211 (Lys-211) is an N6-(pyridoxal phosphate)lysine.

This sequence belongs to the trans-sulfuration enzymes family. Pyridoxal 5'-phosphate is required as a cofactor.

The protein operates within mycotoxin biosynthesis. Its function is as follows. Sulfhydrylase; part of the gene cluster that mediates the biosynthesis of fusaric acid, a mycotoxin with low to moderate toxicity to animals and humans, but with high phytotoxic properties. L-aspartate is suggested as fusaric acid amino acid precursor that is activated and further processed to O-acetyl-L-homoserine by cluster enzymes aspartate kinase FUB3 and homoserine O-acetyltransferase FUB5, as well as enzymes of the primary metabolism. The polyketide synthase (PKS) FUB1 generates the triketide trans-2-hexenal which is presumptively released by the hydrolase FUB4 and linked to the NRPS-bound amino acid precursor by NAD(P)-dependent dehydrogenase FUB6. FUB1, FUB4, and the non-canonical NRPS Fub8 may form an enzyme complex. Further processing of the NRPS-bound intermediate might be carried out by FUB6 and the sulfhydrylase FUB7, enabling a spontaneous electrocyclization to close the carbon backbone of fusaric acid. Dihydrofusaric acid is likely to be released via reduction by the thioester reductase (TR) domain of FUB8 whereupon the final oxidation to fusaric acid may (also) be performed by the FMN-dependent dehydrogenase FUB9. This chain is Sulfhydrylase FUB7, found in Fusarium oxysporum f. sp. lycopersici (strain 4287 / CBS 123668 / FGSC 9935 / NRRL 34936) (Fusarium vascular wilt of tomato).